Consider the following 1037-residue polypeptide: Sentrin-specific protease 7 (1037 aa).

Residues 1-10 (MDRARPGRRR) show a composition bias toward basic residues. Disordered stretches follow at residues 1–27 (MDRA…SSPA) and 185–399 (SDTA…ENSS). A phosphoserine mark is found at Ser-12, Ser-13, and Ser-25. Positions 192-208 (SEQLSSSSDGSLESCQS) are enriched in low complexity. Polar residues predominate over residues 272-282 (GTSNKNTSYSY). Positions 290 to 300 (VSRKRKKRGRS) are enriched in basic residues. Composition is skewed to basic and acidic residues over residues 301-321 (NFHD…HTKE) and 328-341 (VSRK…DSHQ). Low complexity predominate over residues 379–399 (ASSPNKSLESSASSEVSENSS). 2 positions are modified to phosphoserine: Ser-434 and Ser-435. The interval 747–1037 (LGVTNEDLEC…HLQQQKGGSC (291 aa)) is protease. The active site involves His-847. The segment at 873–909 (QFQGQQSQHDHKMTDNDPHTTSTVSTSAEDSQSTEVN) is disordered. A compositionally biased stretch (basic and acidic residues) spans 880–890 (QHDHKMTDNDP). Residues 891 to 909 (HTTSTVSTSAEDSQSTEVN) show a composition bias toward polar residues. The active site involves Asp-926. The active-site Nucleophile is Cys-979.

Belongs to the peptidase C48 family.

Its subcellular location is the cytoplasm. Functionally, protease that acts as a positive regulator of the cGAS-STING pathway by catalyzing desumoylation of CGAS. Desumoylation of CGAS promotes DNA-binding activity of CGAS, subsequent oligomerization and activation. Deconjugates SUMO2 and SUMO3 from targeted proteins, but not SUMO1. Catalyzes the deconjugation of poly-SUMO2 and poly-SUMO3 chains. Has very low efficiency in processing full-length SUMO proteins to their mature forms. The protein is Sentrin-specific protease 7 of Mus musculus (Mouse).